The primary structure comprises 219 residues: Deoxyribose-phosphate aldolase (219 aa).

The active-site Proton donor/acceptor is D89. Catalysis depends on K151, which acts as the Schiff-base intermediate with acetaldehyde. K180 serves as the catalytic Proton donor/acceptor.

This sequence belongs to the DeoC/FbaB aldolase family. DeoC type 1 subfamily.

The protein localises to the cytoplasm. It carries out the reaction 2-deoxy-D-ribose 5-phosphate = D-glyceraldehyde 3-phosphate + acetaldehyde. It participates in carbohydrate degradation; 2-deoxy-D-ribose 1-phosphate degradation; D-glyceraldehyde 3-phosphate and acetaldehyde from 2-deoxy-alpha-D-ribose 1-phosphate: step 2/2. Its function is as follows. Catalyzes a reversible aldol reaction between acetaldehyde and D-glyceraldehyde 3-phosphate to generate 2-deoxy-D-ribose 5-phosphate. The polypeptide is Deoxyribose-phosphate aldolase (Clostridioides difficile (strain 630) (Peptoclostridium difficile)).